The chain runs to 183 residues: MKVKFLGSFFEEFPPPDYPEVVFVGRSNVGKSSLLNMVVGSKVAKVSKTPGRTRAVNYFLLDKKLYLVDVPGYGYAKVGREEMEKWRKMMERYFKERKDNIKMAFLLIDAVAGVQPLDEQMIEWFEYYGIPFTVVITKIDKASQSEIAKTLKQVKRYVGDGAIVLSSAKEGKGKKELLSRILN.

The region spanning 17–183 is the EngB-type G domain; it reads DYPEVVFVGR…KKELLSRILN (167 aa). GTP contacts are provided by residues 25 to 32, 51 to 55, 69 to 72, 137 to 140, and 166 to 168; these read GRSNVGKS, GRTRA, DVPG, TKID, and SSA. Positions 32 and 53 each coordinate Mg(2+).

It belongs to the TRAFAC class TrmE-Era-EngA-EngB-Septin-like GTPase superfamily. EngB GTPase family. The cofactor is Mg(2+).

In terms of biological role, necessary for normal cell division and for the maintenance of normal septation. This Aquifex aeolicus (strain VF5) protein is Probable GTP-binding protein EngB.